A 289-amino-acid chain; its full sequence is 2-hydroxy-6-oxononadienedioate/2-hydroxy-6-oxononatrienedioate hydrolase 1 (289 aa).

The AB hydrolase-1 domain occupies 39–275 (TVVMLHGSGP…RCGHWAQWEH (237 aa)). His-269 (proton acceptor) is an active-site residue.

It belongs to the AB hydrolase superfamily. MhpC family. As to quaternary structure, homodimer.

The catalysed reaction is (2Z,4E)-2-hydroxy-6-oxonona-2,4-dienedioate + H2O = (2Z)-2-hydroxypenta-2,4-dienoate + succinate + H(+). It catalyses the reaction (2Z,4E,7E)-2-hydroxy-6-oxonona-2,4,7-trienedioate + H2O = (2Z)-2-hydroxypenta-2,4-dienoate + fumarate + H(+). It participates in aromatic compound metabolism; 3-phenylpropanoate degradation. Functionally, catalyzes the cleavage of the C5-C6 bond of 2-hydroxy-6-oxononadienedioate and 2-hydroxy-6-oxononatrienedioate, a dienol ring fission product of the bacterial meta-cleavage pathway for degradation of phenylpropionic acid. This chain is 2-hydroxy-6-oxononadienedioate/2-hydroxy-6-oxononatrienedioate hydrolase 1, found in Dechloromonas aromatica (strain RCB).